The sequence spans 142 residues: Large ribosomal subunit protein uL11 (142 aa).

Belongs to the universal ribosomal protein uL11 family. In terms of assembly, part of the ribosomal stalk of the 50S ribosomal subunit. Interacts with L10 and the large rRNA to form the base of the stalk. L10 forms an elongated spine to which L12 dimers bind in a sequential fashion forming a multimeric L10(L12)X complex. One or more lysine residues are methylated.

Its function is as follows. Forms part of the ribosomal stalk which helps the ribosome interact with GTP-bound translation factors. This is Large ribosomal subunit protein uL11 from Shewanella pealeana (strain ATCC 700345 / ANG-SQ1).